The following is a 156-amino-acid chain: Small ribosomal subunit protein uS7 (156 aa).

It belongs to the universal ribosomal protein uS7 family. As to quaternary structure, part of the 30S ribosomal subunit. Contacts proteins S9 and S11.

Functionally, one of the primary rRNA binding proteins, it binds directly to 16S rRNA where it nucleates assembly of the head domain of the 30S subunit. Is located at the subunit interface close to the decoding center, probably blocks exit of the E-site tRNA. The sequence is that of Small ribosomal subunit protein uS7 from Dictyoglomus turgidum (strain DSM 6724 / Z-1310).